The chain runs to 636 residues: Poly(3-hydroxyalkanoate) polymerase subunit PhaC (636 aa).

Disordered stretches follow at residues 1–38 (MYNK…DATD) and 129–152 (QGTR…KRFS). Residues 143-152 (PDTRKDKRFS) show a composition bias toward basic and acidic residues. Cys-373 is an active-site residue.

Belongs to the PHA/PHB synthase family. Type I PhaC subfamily.

Its subcellular location is the cytoplasm. It catalyses the reaction (3R)-3-hydroxybutanoyl-CoA + [(3R)-hydroxybutanoate](n) = [(3R)-hydroxybutanoate](n+1) + CoA. The protein operates within biopolymer metabolism; poly-(R)-3-hydroxybutanoate biosynthesis. Its function is as follows. Polymerizes D(-)-3-hydroxybutyryl-CoA to create PHB which consists of thousands of hydroxybutyrate molecules linked end to end. PHB serves as an intracellular energy reserve material when cells grow under conditions of nutrient limitation. This chain is Poly(3-hydroxyalkanoate) polymerase subunit PhaC, found in Rhizobium etli (strain ATCC 51251 / DSM 11541 / JCM 21823 / NBRC 15573 / CFN 42).